Consider the following 211-residue polypeptide: Adenylyl-sulfate kinase (211 aa).

Residue 32 to 39 (GLSASGKS) coordinates ATP. The Phosphoserine intermediate role is filled by Ser107.

The protein belongs to the APS kinase family. In terms of assembly, homodimer.

It carries out the reaction adenosine 5'-phosphosulfate + ATP = 3'-phosphoadenylyl sulfate + ADP + H(+). Its pathway is sulfur metabolism; hydrogen sulfide biosynthesis; sulfite from sulfate: step 2/3. Its function is as follows. Catalyzes the synthesis of activated sulfate. The protein is Adenylyl-sulfate kinase of Penicillium chrysogenum (Penicillium notatum).